The chain runs to 892 residues: Alanine--tRNA ligase (892 aa).

Residues His-577, His-581, Cys-680, and His-684 each contribute to the Zn(2+) site.

The protein belongs to the class-II aminoacyl-tRNA synthetase family. It depends on Zn(2+) as a cofactor.

The protein localises to the cytoplasm. It catalyses the reaction tRNA(Ala) + L-alanine + ATP = L-alanyl-tRNA(Ala) + AMP + diphosphate. In terms of biological role, catalyzes the attachment of alanine to tRNA(Ala) in a two-step reaction: alanine is first activated by ATP to form Ala-AMP and then transferred to the acceptor end of tRNA(Ala). Also edits incorrectly charged Ser-tRNA(Ala) and Gly-tRNA(Ala) via its editing domain. The protein is Alanine--tRNA ligase of Paenarthrobacter aurescens (strain TC1).